The sequence spans 480 residues: MSPQTETKASVGFKAGVKEYKLTYYTPEYEVKDTDILAAFRVTPQPGVPPEEAGAAVAAESSTGTWTTVWTDGLTSLDRYKGRCYDIEPVPGEEDQYICYVAYPLDLFEEGSVTNMFTSIVGNVFGFKALRALRLEDLRVPTAYIKTFQGPPHGIQVERDKLNKYGRPLLGCTIKPKLGLSAKNYGRAVYECLRGGLDFTKDDENVNSQPFMRWRDRFLFCAEAIFKSQAETGEIKGHYLNATAGTCEEMIKRAMCARELGVPIVMHDYLTGGFTANTSLAHYCRDNGLLLHIHRAMHAVIDRQKNHGMHFRVLAKALRMSGGDHIHAGTVVGKLEGERDITLGFVDLLRDDVIEKDRSRGIYFTQDWVSMPGVLPVASGGIHVWHMPALTEIFGDDSVLQFGGGTLGHPWGNAPGAVANRVALEACVQARNEGRDLAREGNEIIREASKWSPELAAACEVWKAIKFEFDAVDKLDKPAS.

Residues 1 to 2 (MS) constitute a propeptide that is removed on maturation. Proline 3 is subject to N-acetylproline. Lysine 14 carries the N6,N6,N6-trimethyllysine modification. 2 residues coordinate substrate: asparagine 123 and threonine 173. The Proton acceptor role is filled by lysine 175. Residue lysine 177 participates in substrate binding. Mg(2+)-binding residues include lysine 201, aspartate 203, and glutamate 204. N6-carboxylysine is present on lysine 201. Histidine 294 functions as the Proton acceptor in the catalytic mechanism. Positions 295, 327, and 379 each coordinate substrate.

It belongs to the RuBisCO large chain family. Type I subfamily. In terms of assembly, heterohexadecamer of 8 large chains and 8 small chains; disulfide-linked. The disulfide link is formed within the large subunit homodimers. It depends on Mg(2+) as a cofactor. In terms of processing, the disulfide bond which can form in the large chain dimeric partners within the hexadecamer appears to be associated with oxidative stress and protein turnover.

The protein localises to the plastid. It is found in the chloroplast. It carries out the reaction 2 (2R)-3-phosphoglycerate + 2 H(+) = D-ribulose 1,5-bisphosphate + CO2 + H2O. The catalysed reaction is D-ribulose 1,5-bisphosphate + O2 = 2-phosphoglycolate + (2R)-3-phosphoglycerate + 2 H(+). RuBisCO catalyzes two reactions: the carboxylation of D-ribulose 1,5-bisphosphate, the primary event in carbon dioxide fixation, as well as the oxidative fragmentation of the pentose substrate in the photorespiration process. Both reactions occur simultaneously and in competition at the same active site. This Gossypium barbadense (Sea Island cotton) protein is Ribulose bisphosphate carboxylase large chain.